The following is a 133-amino-acid chain: Peptide methionine sulfoxide reductase MsrB (133 aa).

Over residues 1–12 (MSEKVQKSEHEW) the composition is skewed to basic and acidic residues. The tract at residues 1–36 (MSEKVQKSEHEWQQQLTPEQYRVTREKGTERPFTGD) is disordered. Residues 9 to 132 (EHEWQQQLTP…NSVSLDFHPG (124 aa)) form the MsrB domain. Residues C48, C51, C97, and C100 each contribute to the Zn(2+) site. The active-site Nucleophile is C121.

This sequence belongs to the MsrB Met sulfoxide reductase family. Requires Zn(2+) as cofactor.

It carries out the reaction L-methionyl-[protein] + [thioredoxin]-disulfide + H2O = L-methionyl-(R)-S-oxide-[protein] + [thioredoxin]-dithiol. The chain is Peptide methionine sulfoxide reductase MsrB from Chromohalobacter salexigens (strain ATCC BAA-138 / DSM 3043 / CIP 106854 / NCIMB 13768 / 1H11).